A 283-amino-acid chain; its full sequence is Ribosome biogenesis GTPase A (283 aa).

The region spanning 14-178 (RREVTEKLKL…LLDTPGILWP (165 aa)) is the CP-type G domain. GTP is bound by residues 58–61 (NKAD), 86–87 (NS), 130–135 (NVGKST), and Gly174.

The protein belongs to the TRAFAC class YlqF/YawG GTPase family. MTG1 subfamily. In terms of assembly, interacts with ctc. Interacts with the immature 50S ribosome subunit. 2 molecules of rbgA bind to one 50S subunit.

The protein localises to the cytoplasm. Functionally, essential protein that is required for a late step of 50S ribosomal subunit assembly. Has GTPase activity that is stimulated by interaction with the immature 50S ribosome subunit. Binds to the 23S rRNA. Required for the association of ribosomal proteins rplP and rpmA with the large subunit. In Bacillus licheniformis (strain ATCC 14580 / DSM 13 / JCM 2505 / CCUG 7422 / NBRC 12200 / NCIMB 9375 / NCTC 10341 / NRRL NRS-1264 / Gibson 46), this protein is Ribosome biogenesis GTPase A.